The chain runs to 441 residues: MASNYVFSVLRSLLLLIHTVFLGQHHVSSATIIKSLPGFEGPLPFELETGYIGVGEEEEVQLFYYFIKSERNPKEDPLLLWLSGGPGCSSISGLLFENGPLAMKLDVYNGTLPSLVSTTYSWTKASSMIFLDQPVGAGFSYSRTQLLNKPSDSGEAKRIHEFLQKWLGKHQEFSSNPFYVGGDSYSGMVVPATVQEISKGNYECCNPPINLQGYVLGNPLTDFVYDYNSRIPFAHGMALISDELFESLKKTCKGDYRNVHPRNTECLKFIEEFNKCTNSICQRRIIDPFCETETPNCYIYRFLLAAYWANDETVRKALQIKKETIGEWVRCHYGIPYNYDIKSSIPYHMNNSINGYRSLIYSGDHDFEVPFLGTQAWIRSLNYSVIDDWRPWMIKDQIAGYTRTYANKMTFATIRGGGHTIEFKPEEASIMFQRWIKGQPL.

Residues M1–A30 form the signal peptide. Disulfide bonds link C88–C331, C252–C266, and C290–C297. Residue N109 is glycosylated (N-linked (GlcNAc...) asparagine). S184 is a catalytic residue. An N-linked (GlcNAc...) asparagine glycan is attached at N350. D366 is a catalytic residue. N382 is a glycosylation site (N-linked (GlcNAc...) asparagine). H419 is an active-site residue.

It belongs to the peptidase S10 family. As to expression, expressed in roots.

The protein resides in the secreted. In terms of biological role, probable carboxypeptidase. The protein is Serine carboxypeptidase-like 3 (SCPL3) of Arabidopsis thaliana (Mouse-ear cress).